We begin with the raw amino-acid sequence, 117 residues long: MTRIRRGYIARRRRTKIRLFASTFRGSHSRLTRTTTQQKIRALVSAHRDRGKQKRYFRRLWITRINAVIRDNRVFYSYSRLIHDLYKKQLLLNRKILAQIAISNRNCLYMISNEIIK.

The protein belongs to the bacterial ribosomal protein bL20 family.

It is found in the plastid. Its subcellular location is the chloroplast. Functionally, binds directly to 23S ribosomal RNA and is necessary for the in vitro assembly process of the 50S ribosomal subunit. It is not involved in the protein synthesizing functions of that subunit. This chain is Large ribosomal subunit protein bL20c, found in Buxus microphylla (Littleleaf boxwood).